The chain runs to 276 residues: Ammonia monooxygenase alpha subunit (276 aa).

Transmembrane regions (helical) follow at residues 29 to 49 (VYFP…FMLL), 66 to 86 (PVVT…YLWV), 96 to 116 (LCVV…FYWW), 123 to 143 (FVTP…LYLT), and 150 to 170 (ALVG…PIFG). Residues D187, H191, and H204 each contribute to the Cu(+) site. A helical membrane pass occupies residues 219-239 (VIAAFFSAFVSMLMFTVWWYL).

In terms of assembly, the soluble ammonia monooxygenase is a nonamer composed of three alpha subunits (AmoA), three beta subunits (AmoB) and three gamma subunits (Cytochrome c1 PetC). Requires Cu(+) as cofactor.

It is found in the cell membrane. Its subcellular location is the cytoplasm. It carries out the reaction AH2 + NH4(+) + O2 = hydroxylamine + A + H2O + H(+). With respect to regulation, in vitro, inhibited by acetylene. In fact, acetylene is oxidized to ketene which binds irreversibly to His-191 of ammonia monooxygenase alpha subunit (AmoA). In terms of biological role, part of the ammonia monooxygenase complex, which catalyzes the oxidation of ammonia to hydroxylamine, the first reaction in the process of ammonia oxidation to nitrite. In Nitrosomonas europaea (strain ATCC 19718 / CIP 103999 / KCTC 2705 / NBRC 14298), this protein is Ammonia monooxygenase alpha subunit.